The primary structure comprises 355 residues: NADH dehydrogenase [ubiquinone] 1 alpha subcomplex subunit 10, mitochondrial (355 aa).

The transit peptide at 1–35 directs the protein to the mitochondrion; the sequence is MALRLLKLAATSASARVVAAGAQRVRGIHSSVQCK. S250 carries the phosphoserine; by PINK1 modification. K285 carries the post-translational modification N6-succinyllysine.

It belongs to the complex I NDUFA10 subunit family. As to quaternary structure, complex I is composed of 45 different subunits. This a component of the hydrophobic protein fraction. FAD is required as a cofactor. Post-translationally, phosphorylation at Ser-250 by PINK1 is required for the binding and/or reduction of the complex I substrate ubiquinone.

It is found in the mitochondrion matrix. In terms of biological role, accessory subunit of the mitochondrial membrane respiratory chain NADH dehydrogenase (Complex I), that is believed not to be involved in catalysis. Complex I functions in the transfer of electrons from NADH to the respiratory chain. The immediate electron acceptor for the enzyme is believed to be ubiquinone. This Homo sapiens (Human) protein is NADH dehydrogenase [ubiquinone] 1 alpha subcomplex subunit 10, mitochondrial (NDUFA10).